The following is a 410-amino-acid chain: Probable serine/threonine-protein kinase PBL9 (410 aa).

A lipid anchor (N-myristoyl glycine) is attached at glycine 2. A lipid anchor (S-palmitoyl cysteine) is attached at cysteine 4. The interval 11–46 (AESSGASTKYDAKDIGSLGSKASSVSVRPSPRTEGE) is disordered. The region spanning 68 to 352 (FRPDSVLGEG…MSEVVSHLEH (285 aa)) is the Protein kinase domain. Residues 74-82 (LGEGGFGCV) and lysine 106 contribute to the ATP site. Tyrosine 151 is subject to Phosphotyrosine. Residue aspartate 203 is the Proton acceptor of the active site. Residues serine 207 and serine 237 each carry the phosphoserine modification. Residues threonine 238 and threonine 243 each carry the phosphothreonine modification. At tyrosine 251 the chain carries Phosphotyrosine.

The protein belongs to the protein kinase superfamily. Ser/Thr protein kinase family. Interacts with the Xanthomonas campestris effector XopAC/AvrAC. Expressed in stomatal guard cells of leaves.

It is found in the cell membrane. The catalysed reaction is L-seryl-[protein] + ATP = O-phospho-L-seryl-[protein] + ADP + H(+). It catalyses the reaction L-threonyl-[protein] + ATP = O-phospho-L-threonyl-[protein] + ADP + H(+). Possible bi-functional kinase. In vitro, it exhibits serine/threonine activity. In vivo, can phosphorylate tyrosine residues of limited substrates. May be involved in plant defense signaling. The sequence is that of Probable serine/threonine-protein kinase PBL9 from Arabidopsis thaliana (Mouse-ear cress).